Consider the following 95-residue polypeptide: Protein TusB (95 aa).

This sequence belongs to the DsrH/TusB family. Heterohexamer, formed by a dimer of trimers. The hexameric TusBCD complex contains 2 copies each of TusB, TusC and TusD. The TusBCD complex interacts with TusE.

Its subcellular location is the cytoplasm. In terms of biological role, part of a sulfur-relay system required for 2-thiolation of 5-methylaminomethyl-2-thiouridine (mnm(5)s(2)U) at tRNA wobble positions. This Pectobacterium carotovorum subsp. carotovorum (strain PC1) protein is Protein TusB.